The sequence spans 243 residues: Carboxy-S-adenosyl-L-methionine synthase (243 aa).

S-adenosyl-L-methionine is bound by residues Tyr-39, Gly-64–Ser-66, Asp-90–Asn-91, Asp-118–Leu-119, Asn-133, and Arg-200.

It belongs to the class I-like SAM-binding methyltransferase superfamily. Cx-SAM synthase family. In terms of assembly, homodimer.

It carries out the reaction prephenate + S-adenosyl-L-methionine = carboxy-S-adenosyl-L-methionine + 3-phenylpyruvate + H2O. Its function is as follows. Catalyzes the conversion of S-adenosyl-L-methionine (SAM) to carboxy-S-adenosyl-L-methionine (Cx-SAM). The sequence is that of Carboxy-S-adenosyl-L-methionine synthase from Idiomarina loihiensis (strain ATCC BAA-735 / DSM 15497 / L2-TR).